Reading from the N-terminus, the 366-residue chain is Neuropeptide Y receptor type 1 (366 aa).

Residues 1 to 39 are Extracellular-facing; it reads MNFSTYFENLSVPNNISGNITFPISEDCALPLPMIFTLA. Asn2, Asn9, and Asn15 each carry an N-linked (GlcNAc...) asparagine glycan. A helical membrane pass occupies residues 40–60; that stretch reads LAYGAVIILGLSGNLALIIII. Topologically, residues 61–82 are cytoplasmic; sequence LKQKEMRNVTNILIVNLSFSDL. A helical membrane pass occupies residues 83–103; that stretch reads LATIMCLPFTLIYTLMDHWIF. Topologically, residues 104-111 are extracellular; the sequence is GEVMCKLN. Residues Cys108 and Cys193 are joined by a disulfide bond. Residues 112–132 traverse the membrane as a helical segment; sequence EYIQCVSVTVSIFSLVLIAIE. At 133 to 149 the chain is on the cytoplasmic side; the sequence is RHQLIINPRGWRPNNRH. A helical transmembrane segment spans residues 150 to 170; it reads ACFGITVIWGFAMACSTPLMM. Residues 171 to 203 lie on the Extracellular side of the membrane; it reads YSVLTDEPFKNISLDSYIGKYVCLEDFPEDKFR. The N-linked (GlcNAc...) asparagine glycan is linked to Asn181. The helical transmembrane segment at 204–224 threads the bilayer; it reads LSYTTLLFILQYLGPLCFIFV. Residues 225–260 lie on the Cytoplasmic side of the membrane; sequence CYTKIFLRLKRRNNMMDKIRDNKYRSSETKRINIML. Residues 261–281 form a helical membrane-spanning segment; that stretch reads LSIVVGFALCWLPFFIFNLVF. Over 282-294 the chain is Extracellular; that stretch reads DWNHEAVATCNHN. The chain crosses the membrane as a helical span at residues 295–315; it reads LLFLICHLTAMISTCVNPIFY. Residues 316 to 366 lie on the Cytoplasmic side of the membrane; the sequence is GFLNKNFQRDLQFFFNFCDFRSREDDYETIAMSTMHTDVSKTSLKQASPIA. Cys333 is lipidated: S-palmitoyl cysteine.

Belongs to the G-protein coupled receptor 1 family.

It is found in the cell membrane. Functionally, receptor for neuropeptide Y and peptide YY. The sequence is that of Neuropeptide Y receptor type 1 (npy1r) from Xenopus laevis (African clawed frog).